Here is a 508-residue protein sequence, read N- to C-terminus: Phytepsin (508 aa).

The N-terminal stretch at 1-27 is a signal peptide; that stretch reads MGTRGLALALLAAVLLLQTVLPAASEA. A propeptide spans 28–66 (activation peptide); the sequence is EGLVRIALKKRPIDRNSRVATGLSGGEEQPLLSGANPLR. Positions 84–505 constitute a Peptidase A1 domain; sequence YFGEIGVGTP…DYGKLRIGFA (422 aa). Asp-102 is a catalytic residue. 2 cysteine pairs are disulfide-bonded: Cys-115/Cys-121 and Cys-280/Cys-284. Asp-289 is a catalytic residue. In terms of domain architecture, Saposin B-type spans 314 to 419; sequence VVSQECKTIV…NQLCNRLPSP (106 aa). 4 cysteine pairs are disulfide-bonded: Cys-319–Cys-413, Cys-344–Cys-385, Cys-350–Cys-382, and Cys-427–Cys-464. A glycan (N-linked (GlcNAc...) asparagine) is linked at Asn-399.

The protein belongs to the peptidase A1 family. As to quaternary structure, heterodimer of two subunits (29 kDa and 11 kDa) processed from the precursor molecule. A large enzyme (32 kDa and 16 kDa) is an intermediate precursor form. Embryo and leaf.

It is found in the vacuole. The enzyme catalyses Prefers hydrophobic residues Phe, Val, Ile, Leu, and Ala at P1 and P1', but also cleaves -Phe-|-Asp- and -Asp-|-Asp- bonds in 2S albumin from plant seeds.. Involved in the breakdown of propeptides of storage proteins in protein-storage vacuoles. The protein is Phytepsin of Hordeum vulgare (Barley).